The following is a 352-amino-acid chain: Gap junction alpha-4 protein (352 aa).

At 2–23 the chain is on the cytoplasmic side; sequence GDWEFLEKLLDQVQEHSTSIGK. The chain crosses the membrane as a helical span at residues 24–46; it reads IWLMVLFIFRILILGLAGESVWG. Residues 47–76 lie on the Extracellular side of the membrane; the sequence is DEQSDFICNTEQPGCTNVCYDKAFPISHVR. Residues 77–99 traverse the membrane as a helical segment; the sequence is YWVLQFLFVSTPTLFYLGHVIYL. Residues 100-153 are Cytoplasmic-facing; it reads SRREEKLKQKESELRALDDKEQVEQAIAIIEKKKMKLYIQEDGTVKIKGALMCT. The chain crosses the membrane as a helical span at residues 154–176; that stretch reads YLTSVIFKSLFEAGFLLGQWYLY. At 177–208 the chain is on the extracellular side; sequence GFVMTPIYVCERVPCPHKVDCFVSRPMEKTIF. The helical transmembrane segment at 209-231 threads the bilayer; the sequence is IVFMLVVSLISLFLNVLELIHLV. At 232-352 the chain is on the cytoplasmic side; it reads CKSMIDTLKK…SSSASKKQYV (121 aa). A disordered region spans residues 330–352; the sequence is KTHSTMEKPSTRASSSASKKQYV. Residues 340–352 are compositionally biased toward polar residues; sequence TRASSSASKKQYV.

The protein belongs to the connexin family. Alpha-type (group II) subfamily. In terms of assembly, a connexon is composed of a hexamer of connexins.

It localises to the cell membrane. The protein resides in the cell junction. The protein localises to the gap junction. In terms of biological role, one gap junction consists of a cluster of closely packed pairs of transmembrane channels, the connexons, through which materials of low MW diffuse from one cell to a neighboring cell. The polypeptide is Gap junction alpha-4 protein (gja4) (Xenopus tropicalis (Western clawed frog)).